Reading from the N-terminus, the 426-residue chain is Serine hydroxymethyltransferase (426 aa).

(6S)-5,6,7,8-tetrahydrofolate-binding positions include L118 and 122 to 124; that span reads GHL. Residue K227 is modified to N6-(pyridoxal phosphate)lysine.

It belongs to the SHMT family. In terms of assembly, homodimer. The cofactor is pyridoxal 5'-phosphate.

Its subcellular location is the cytoplasm. The enzyme catalyses (6R)-5,10-methylene-5,6,7,8-tetrahydrofolate + glycine + H2O = (6S)-5,6,7,8-tetrahydrofolate + L-serine. It functions in the pathway one-carbon metabolism; tetrahydrofolate interconversion. The protein operates within amino-acid biosynthesis; glycine biosynthesis; glycine from L-serine: step 1/1. Catalyzes the reversible interconversion of serine and glycine with tetrahydrofolate (THF) serving as the one-carbon carrier. This reaction serves as the major source of one-carbon groups required for the biosynthesis of purines, thymidylate, methionine, and other important biomolecules. Also exhibits THF-independent aldolase activity toward beta-hydroxyamino acids, producing glycine and aldehydes, via a retro-aldol mechanism. This chain is Serine hydroxymethyltransferase, found in Mycobacterium leprae (strain Br4923).